A 621-amino-acid polypeptide reads, in one-letter code: Transmembrane protein 200C (621 aa).

A disordered region spans residues 12-37 (ARKQDPLRPPSQIPKRKRKAKKRRKN). Over residues 25 to 36 (PKRKRKAKKRRK) the composition is skewed to basic residues. The chain crosses the membrane as a helical span at residues 53–73 (GLIALCGILVLLVGIAMAVVG). The tract at residues 80–147 (GTNREGGKQL…RAASPSSSST (68 aa)) is disordered. The segment covering 125–147 (SSSAGAPRSTPPARAASPSSSST) has biased composition (low complexity). A helical transmembrane segment spans residues 167–187 (VFGPLIMGIGIFLFICANAVL). Disordered regions lie at residues 284 to 315 (WPPH…PREP), 347 to 368 (ASSC…QSTA), and 384 to 598 (LQGG…FTNK). Residues 290–303 (APSGGRPRGAASPP) show a composition bias toward low complexity. Residues 405–418 (PGERGSQEIPRGEL) show a composition bias toward basic and acidic residues. Residues 479–490 (RAPPSPEPPPSP) are compositionally biased toward pro residues. Composition is skewed to low complexity over residues 491 to 505 (GSAD…KAAS) and 523 to 533 (GSSQSDDPSSS). Positions 586–595 (EQPQPVQRQF) are enriched in polar residues.

It belongs to the TMEM200 family.

It is found in the membrane. This chain is Transmembrane protein 200C (TMEM200C), found in Homo sapiens (Human).